Reading from the N-terminus, the 257-residue chain is ATP synthase subunit a (257 aa).

A propeptide spans 1 to 8 (MRHLDFVL) (removed in mature form). The next 7 helical transmembrane spans lie at 34 to 54 (LTNI…YSLL), 93 to 113 (FFPL…IGLV), 122 to 142 (HFIL…ILGF), 149 to 169 (FFSL…LVLI), 187 to 207 (ANIL…YNIM), 210 to 230 (GIIF…FSGL), and 231 to 251 (ELAI…SYIK).

It belongs to the ATPase A chain family. As to quaternary structure, F-type ATPases have 2 components, CF(1) - the catalytic core - and CF(0) - the membrane proton channel. CF(1) has five subunits: alpha(3), beta(3), gamma(1), delta(1), epsilon(1). CF(0) has three main subunits: a, b and c.

It is found in the mitochondrion inner membrane. In terms of biological role, mitochondrial membrane ATP synthase (F(1)F(0) ATP synthase or Complex V) produces ATP from ADP in the presence of a proton gradient across the membrane which is generated by electron transport complexes of the respiratory chain. F-type ATPases consist of two structural domains, F(1) - containing the extramembraneous catalytic core and F(0) - containing the membrane proton channel, linked together by a central stalk and a peripheral stalk. During catalysis, ATP synthesis in the catalytic domain of F(1) is coupled via a rotary mechanism of the central stalk subunits to proton translocation. Key component of the proton channel; it may play a direct role in the translocation of protons across the membrane. In Penicillium chrysogenum (Penicillium notatum), this protein is ATP synthase subunit a (atp6).